The primary structure comprises 393 residues: S-adenosylmethionine synthase 2 (393 aa).

E9 contacts Mg(2+). Residue H15 participates in ATP binding. E43 contacts K(+). Residues E56 and Q99 each coordinate L-methionine. Residues 167–169 (DGK), 235–238 (SGRF), D246, 252–253 (RK), A269, K273, and K277 each bind ATP. D246 contacts L-methionine. K277 lines the L-methionine pocket.

Belongs to the AdoMet synthase family. In terms of assembly, homotetramer. Interacts with GRF3. It depends on Mn(2+) as a cofactor. Mg(2+) is required as a cofactor. The cofactor is Co(2+). Requires K(+) as cofactor. As to expression, highly expressed in stems and roots. Detected in trichomes (at the protein level).

It is found in the cytoplasm. The catalysed reaction is L-methionine + ATP + H2O = S-adenosyl-L-methionine + phosphate + diphosphate. It participates in amino-acid biosynthesis; S-adenosyl-L-methionine biosynthesis; S-adenosyl-L-methionine from L-methionine: step 1/1. Its activity is regulated as follows. Inhibited by 5,5'-dithiobis-2-nitrobenzoic acid (DTNB) and N-ethylmaleimide (NEM) (in vitro). In terms of biological role, catalyzes the formation of S-adenosylmethionine from methionine and ATP. The reaction comprises two steps that are both catalyzed by the same enzyme: formation of S-adenosylmethionine (AdoMet) and triphosphate, and subsequent hydrolysis of the triphosphate. This chain is S-adenosylmethionine synthase 2 (SAM2), found in Arabidopsis thaliana (Mouse-ear cress).